The following is a 491-amino-acid chain: G2/mitotic-specific cyclin-2 (491 aa).

Residue Ser2 is modified to N-acetylserine. Disordered regions lie at residues 59–107 (EGSR…DPSS) and 164–184 (HPAR…SGKK). The segment covering 67-77 (TRESVSRSTAA) has biased composition (polar residues).

The protein belongs to the cyclin family. Cyclin AB subfamily. As to quaternary structure, interacts with NAP1.

Functionally, essential for the control of the cell cycle at the G2/M (mitosis) transition. Interacts with the CDC2 protein kinase to form MPF. G2/M cyclins accumulate steadily during G2 and are abruptly destroyed at mitosis. The polypeptide is G2/mitotic-specific cyclin-2 (CLB2) (Saccharomyces cerevisiae (strain ATCC 204508 / S288c) (Baker's yeast)).